Reading from the N-terminus, the 328-residue chain is Thiamine thiazole synthase (328 aa).

Residues A87, 108–109, G116, and V181 contribute to the substrate site; that span reads EA. C215 carries the 2,3-didehydroalanine (Cys) modification. Substrate is bound by residues D217, H232, M284, and 294–296; that span reads RMG.

This sequence belongs to the THI4 family. Homooctamer. The cofactor is Fe cation. Post-translationally, during the catalytic reaction, a sulfide is transferred from Cys-215 to a reaction intermediate, generating a dehydroalanine residue.

The protein resides in the cytoplasm. The protein localises to the nucleus. The enzyme catalyses [ADP-thiazole synthase]-L-cysteine + glycine + NAD(+) = [ADP-thiazole synthase]-dehydroalanine + ADP-5-ethyl-4-methylthiazole-2-carboxylate + nicotinamide + 3 H2O + 2 H(+). Functionally, involved in biosynthesis of the thiamine precursor thiazole. Catalyzes the conversion of NAD and glycine to adenosine diphosphate 5-(2-hydroxyethyl)-4-methylthiazole-2-carboxylic acid (ADT), an adenylated thiazole intermediate. The reaction includes an iron-dependent sulfide transfer from a conserved cysteine residue of the protein to a thiazole intermediate. The enzyme can only undergo a single turnover, which suggests it is a suicide enzyme. May have additional roles in adaptation to various stress conditions and in DNA damage tolerance. The sequence is that of Thiamine thiazole synthase (thi2) from Schizosaccharomyces pombe (strain 972 / ATCC 24843) (Fission yeast).